We begin with the raw amino-acid sequence, 327 residues long: Malate dehydrogenase (327 aa).

12 to 18 contributes to the NAD(+) binding site; that stretch reads GAAGQIA. Residues arginine 93 and arginine 99 each contribute to the substrate site. NAD(+) contacts are provided by residues asparagine 106, glutamine 113, and 130 to 132; that span reads VGN. Positions 132 and 163 each coordinate substrate. Histidine 188 functions as the Proton acceptor in the catalytic mechanism.

Belongs to the LDH/MDH superfamily. MDH type 2 family.

It carries out the reaction (S)-malate + NAD(+) = oxaloacetate + NADH + H(+). Its function is as follows. Catalyzes the reversible oxidation of malate to oxaloacetate. In Burkholderia mallei (strain NCTC 10247), this protein is Malate dehydrogenase.